A 522-amino-acid chain; its full sequence is Cytochrome P450 monooxygenase AKT7 (522 aa).

Residues 10–30 (LYVTCTVLAALILGYIQAMII) traverse the membrane as a helical segment. Cysteine 452 provides a ligand contact to heme.

The protein belongs to the cytochrome P450 family. Requires heme as cofactor.

Its subcellular location is the membrane. The protein operates within mycotoxin biosynthesis. Cytochrome P450 monooxygenase; part of the gene clusters that mediate the biosynthesis of the host-selective toxins (HSTs) AK-toxins responsible for Japanese pear black spot disease by the Japanese pear pathotype. AK-toxins are esters of 9,10-epoxy 8-hydroxy 9-methyldecatrienoic acid (EDA). On cellular level, AK-toxins affect plasma membrane of susceptible cells and cause a sudden increase in loss of K(+) after a few minutes of toxin treatment. The acyl-CoA ligase AKT1, the hydrolase AKT2 and enoyl-CoA hydratase AKT3 are all involved in the biosynthesis of the AK-, AF- and ACT-toxin common 9,10-epoxy-8-hydroxy-9-methyl-decatrienoic acid (EDA) structural moiety. Part of the EDA biosynthesis occurs in the peroxisome since these 3 enzymes are localized in peroxisomes. The exact roles of the 3 enzymes, as well as of additional AK-toxin clusters enzymes, including AKT4, AKT6 and AKTS1, have still to be elucidated. The Cytochrome P450 monooxygenase AKT7 on the other side functions to limit production of EDA and AK-toxin, probably via the catalysis of a side reaction of EDA or its precursor. This Alternaria alternata (Alternaria rot fungus) protein is Cytochrome P450 monooxygenase AKT7.